The sequence spans 301 residues: Mitochondrial carnitine/acylcarnitine carrier protein (301 aa).

A2 carries the post-translational modification N-acetylalanine. Over 2 to 12 the chain is Cytoplasmic; that stretch reads ADQPKPISPLK. Solcar repeat units lie at residues 8-99, 108-196, and 207-293; these read ISPL…GKKL, LSYP…LKNI, and LSAP…AMKF. Residues 13 to 31 form a helical membrane-spanning segment; sequence NLLAGGFGGVCLVFVGHPL. The Mitochondrial matrix portion of the chain corresponds to 32 to 73; it reads DTVKVRLQTQPPSLPGQPPMYSGTFDCFRKTLFREGITGLYR. The helical transmembrane segment at 74–93 threads the bilayer; it reads GMAAPIIGVTPMFAVCFFGF. Residues 94–112 are Cytoplasmic-facing; the sequence is GLGKKLQQKHPEDVLSYPQ. A helical transmembrane segment spans residues 113–131; that stretch reads LFAAGMLSGVFTTGIMTPG. The Mitochondrial matrix segment spans residues 132 to 170; the sequence is ERIKCLLQIQASSGESKYTGTLDCAKKLYQEFGIRGIYK. 2 positions are modified to N6-acetyllysine: K148 and K157. K170 carries the post-translational modification N6-acetyllysine; alternate. K170 carries the N6-succinyllysine; alternate modification. Residues 171 to 190 traverse the membrane as a helical segment; the sequence is GTVLTLMRDVPASGMYFMTY. Over 191 to 211 the chain is Cytoplasmic; it reads EWLKNIFTPEGKRVSELSAPR. A helical transmembrane segment spans residues 212–230; sequence ILVAGGIAGIFNWAVAIPP. The Mitochondrial matrix segment spans residues 231–267; it reads DVLKSRFQTAPPGKYPNGFRDVLRELIRDEGVTSLYK. A helical transmembrane segment spans residues 268–287; sequence GFNAVMIRAFPANAACFLGF. Topologically, residues 288 to 301 are cytoplasmic; it reads EVAMKFLNWATPNL.

This sequence belongs to the mitochondrial carrier (TC 2.A.29) family.

The protein localises to the mitochondrion inner membrane. The catalysed reaction is O-acetyl-(R)-carnitine(in) + (R)-carnitine(out) = O-acetyl-(R)-carnitine(out) + (R)-carnitine(in). It carries out the reaction an O-acyl-(R)-carnitine(in) + (R)-carnitine(out) = an O-acyl-(R)-carnitine(out) + (R)-carnitine(in). The enzyme catalyses O-propanoyl-(R)-carnitine(in) + (R)-carnitine(out) = O-propanoyl-(R)-carnitine(out) + (R)-carnitine(in). It catalyses the reaction O-hexadecanoyl-(R)-carnitine(in) + (R)-carnitine(out) = O-hexadecanoyl-(R)-carnitine(out) + (R)-carnitine(in). The catalysed reaction is O-octanoyl-(R)-carnitine(in) + (R)-carnitine(out) = O-octanoyl-(R)-carnitine(out) + (R)-carnitine(in). It carries out the reaction (R)-carnitine(in) = (R)-carnitine(out). Functionally, mediates the electroneutral exchange of acylcarnitines (O-acyl-(R)-carnitine or L-acylcarnitine) of different acyl chain lengths (ranging from O-acetyl-(R)-carnitine to long-chain O-acyl-(R)-carnitines) with free carnitine ((R)-carnitine or L-carnitine) across the mitochondrial inner membrane, via a ping-pong mechanism. Key player in the mitochondrial oxidation pathway, it translocates the fatty acids in the form of acylcarnitines into the mitochondrial matrix, where the carnitine palmitoyltransferase 2 (CPT-2) activates them to undergo fatty acid beta-oxidation. Catalyzes the unidirectional transport (uniport) of carnitine at lower rates than the antiport (exchange). The polypeptide is Mitochondrial carnitine/acylcarnitine carrier protein (Homo sapiens (Human)).